We begin with the raw amino-acid sequence, 72 residues long: Translation initiation factor IF-1 (72 aa).

An S1-like domain is found at 1-72 (MSKSDIIEMQ…TRGRITWRAK (72 aa)).

It belongs to the IF-1 family. In terms of assembly, component of the 30S ribosomal translation pre-initiation complex which assembles on the 30S ribosome in the order IF-2 and IF-3, IF-1 and N-formylmethionyl-tRNA(fMet); mRNA recruitment can occur at any time during PIC assembly.

It localises to the cytoplasm. Functionally, one of the essential components for the initiation of protein synthesis. Stabilizes the binding of IF-2 and IF-3 on the 30S subunit to which N-formylmethionyl-tRNA(fMet) subsequently binds. Helps modulate mRNA selection, yielding the 30S pre-initiation complex (PIC). Upon addition of the 50S ribosomal subunit IF-1, IF-2 and IF-3 are released leaving the mature 70S translation initiation complex. The chain is Translation initiation factor IF-1 from Clostridium perfringens (strain 13 / Type A).